Here is a 569-residue protein sequence, read N- to C-terminus: Hexose transporter HXT8 (569 aa).

The tract at residues 1-38 (MTDRKTNLPEEPIFEEAEDDGCPSIENSSHLSVPTVEE) is disordered. Topologically, residues 1–61 (MTDRKTNLPE…EVVVPEKPAS (61 aa)) are cytoplasmic. A compositionally biased stretch (acidic residues) spans 12–21 (PIFEEAEDDG). Residues 62-82 (AYATVSIMCLCMAFGGFMSGW) form a helical membrane-spanning segment. Residues 83–118 (DTGTISGFVNQTDFLRRFGNYSHSKNTYYLSNVRTG) are Extracellular-facing. Residues Asn92 and Asn102 are each glycosylated (N-linked (GlcNAc...) asparagine). The helical transmembrane segment at 119-139 (LIVSIFNVGSAIGCLFLSKLG) threads the bilayer. Residues 140-145 (DIYGRC) lie on the Cytoplasmic side of the membrane. A helical transmembrane segment spans residues 146 to 166 (MGLIIVIVVYMVGIVIQIASI). Topologically, residues 167 to 176 (DKWYQYFIGR) are extracellular. Residues 177 to 197 (IIAGIGAGSISVLAPMLISET) form a helical membrane-spanning segment. Topologically, residues 198-203 (APKHIR) are cytoplasmic. The helical transmembrane segment at 204-224 (GTLLACWQLMVTFAIFLGYCT) threads the bilayer. Over 225–238 (NYGTKTYSNSVQWR) the chain is Extracellular. Residues 239 to 259 (VPLGLCFAWAIIMIGGMTFVP) form a helical membrane-spanning segment. Topologically, residues 260 to 342 (ESPRFLVQVG…INSLQQLTGD (83 aa)) are cytoplasmic. The chain crosses the membrane as a helical span at residues 343-359 (NYFFYYGTTIFKSVGMN). The Extracellular portion of the chain corresponds to 360-365 (DSFETS). The helical transmembrane segment at 366–383 (IVLGIVNFASCFFSLYSV) threads the bilayer. At 384 to 390 (DKLGRRR) the chain is on the cytoplasmic side. A helical transmembrane segment spans residues 391 to 411 (CLLLGAATMTACMVIYASVGV). At 412 to 433 (TRLYPNGKSEPSSKGAGNCTIV) the chain is on the extracellular side. N-linked (GlcNAc...) asparagine glycosylation occurs at Asn429. A helical transmembrane segment spans residues 434–454 (FTCFYIFCFSCTWGPVCYVII). At 455-471 (SETFPLRVRSKCMSVAT) the chain is on the cytoplasmic side. A helical membrane pass occupies residues 472–492 (AANLLWGFLIGFFTPFITSAI). Position 493 (Asn493) is a topological domain, extracellular. A helical membrane pass occupies residues 494-514 (FYYGYVFMGCLAFSYFYVFFF). Topologically, residues 515–569 (VPETKGLTLEEVDEMWMDGVLPWKSESWVPASRRDGDYDNEKLQHDEKPFYKRMF) are cytoplasmic.

The protein belongs to the major facilitator superfamily. Sugar transporter (TC 2.A.1.1) family.

Its subcellular location is the membrane. Probable glucose transporter. The sequence is that of Hexose transporter HXT8 (HXT8) from Saccharomyces cerevisiae (strain ATCC 204508 / S288c) (Baker's yeast).